The primary structure comprises 658 residues: Translin-associated factor X-interacting protein 1 (658 aa).

Coiled coils occupy residues 144–184 (EISL…AEEY) and 230–295 (ALKM…LMQL).

As to quaternary structure, interacts with TSNAX.

It is found in the cytoplasm. It localises to the perinuclear region. Its function is as follows. Possible role in spermatogenesis. This is Translin-associated factor X-interacting protein 1 from Homo sapiens (Human).